The sequence spans 192 residues: uncharacterized protein (192 aa).

A coiled-coil region spans residues 53-111 (CLKESVERARKVYLSLLKDYERKSREYEKAYENYLKELRTYRETLYRIKEDLKFYERIC).

This is an uncharacterized protein from Aquifex aeolicus (strain VF5).